The sequence spans 170 residues: Adenine phosphoribosyltransferase (170 aa).

The protein belongs to the purine/pyrimidine phosphoribosyltransferase family. Homodimer.

The protein resides in the cytoplasm. It carries out the reaction AMP + diphosphate = 5-phospho-alpha-D-ribose 1-diphosphate + adenine. The protein operates within purine metabolism; AMP biosynthesis via salvage pathway; AMP from adenine: step 1/1. Catalyzes a salvage reaction resulting in the formation of AMP, that is energically less costly than de novo synthesis. The sequence is that of Adenine phosphoribosyltransferase from Acaryochloris marina (strain MBIC 11017).